A 203-amino-acid polypeptide reads, in one-letter code: MDRVVLMLSVLSLGVSSQPITDGQRLFSIAVSRVQHLHLLAQRLFSDFESSLQTEEQLKLNKIFPDFCNSDYIISPIDKHETQRSSVLKLLSISYRLVESWEFPSRSLSGGSAPRNQISPKLSELKMGIHLLIRANEDGAEIFPDSSALQLAPYGNYYQSLGADESLRRTYELLACFKKDMHKVETYLTVAKCRLSPEANCTL.

The first 17 residues, 1 to 17, serve as a signal peptide directing secretion; sequence MDRVVLMLSVLSLGVSS. Residue Gln18 is modified to Pyrrolidone carboxylic acid. His36 provides a ligand contact to Zn(2+). A disulfide bond links Cys68 and Cys176. A Zn(2+)-binding site is contributed by Glu185. A disulfide bridge connects residues Cys193 and Cys201.

The protein belongs to the somatotropin/prolactin family.

It localises to the secreted. In terms of biological role, growth hormone plays an important role in growth control and is involved in the regulation of several anabolic processes. Implicated as an osmoregulatory substance important for seawater adaptation. This is Somatotropin (gh) from Pagrus major (Red sea bream).